A 433-amino-acid chain; its full sequence is MTSQAPPQPASSPGVAAPAAASSIPNLKDRLPKLEPRKRRSGPSNPTPIPETPALPTPPDTSSNWTFKTPSRRILSKKDHDIFLSSPTCKLVTAWVFGLAESIVDTPNSAIRDADLSALIKTILHILDETEQLVTKSPPNEQGGSRFGNKAFRGLLDLAQKNSAAWHHDIGVQNEDAINELSTYFCESFGNANRIDYGSGHELNFMIWLLCLYQLGLLKQSDFKPIVLRVFVRYLEVMRVIQMTYYLEPAGSHGVWGLDDYQFLPFLFGATQLLHHPYITPRAIHQDLTLEEFGHEYMYLGQVSFVNSTKTVKGLRWHSPMLDDISSARSWTKIDGGMRRMFVAEVLGKLPVMQHFLFGSLVPADDSMSEDTGAGDEADVEDDPHAGHDHTGKAHDGTGWGDCCGIKVPSSIAAAQEMKKRGMNQGLRRIPFD.

Positions M1–A10 are enriched in pro residues. Disordered stretches follow at residues M1–F67 and S367–W400. A compositionally biased stretch (low complexity) spans S11–S23. Pro residues predominate over residues N45–P59. A compositionally biased stretch (acidic residues) spans S367–D382. Basic and acidic residues predominate over residues D383–D396.

It belongs to the PTPA-type PPIase family.

The protein localises to the cytoplasm. The enzyme catalyses [protein]-peptidylproline (omega=180) = [protein]-peptidylproline (omega=0). PPIases accelerate the folding of proteins. It catalyzes the cis-trans isomerization of proline imidic peptide bonds in oligopeptides. Acts as a regulatory subunit for PP2A-like phosphatases modulating their activity or substrate specificity, probably by inducing a conformational change in the catalytic subunit, a direct target of the PPIase. Can reactivate inactive phosphatase PP2A-phosphatase methylesterase complexes (PP2Ai) in presence of ATP and Mg(2+) by dissociating the inactive form from the complex. The polypeptide is Serine/threonine-protein phosphatase 2A activator 2 (RRD2) (Gibberella zeae (strain ATCC MYA-4620 / CBS 123657 / FGSC 9075 / NRRL 31084 / PH-1) (Wheat head blight fungus)).